We begin with the raw amino-acid sequence, 248 residues long: Exosome complex component Rrp41 (248 aa).

It belongs to the RNase PH family. Rrp41 subfamily. In terms of assembly, component of the archaeal exosome complex. Forms a hexameric ring-like arrangement composed of 3 Rrp41-Rrp42 heterodimers. The hexameric ring associates with a trimer of Rrp4 and/or Csl4 subunits.

It localises to the cytoplasm. Its function is as follows. Catalytic component of the exosome, which is a complex involved in RNA degradation. Has 3'-&gt;5' exoribonuclease activity. Can also synthesize heteromeric RNA-tails. The sequence is that of Exosome complex component Rrp41 from Thermoplasma volcanium (strain ATCC 51530 / DSM 4299 / JCM 9571 / NBRC 15438 / GSS1).